Here is a 246-residue protein sequence, read N- to C-terminus: Dof zinc finger protein DOF4.7 (246 aa).

2 stretches are compositionally biased toward polar residues: residues 1 to 12 and 27 to 37; these read MMTSSHQSNTTG and QINNKEPSPAT. The tract at residues 1–39 is disordered; sequence MMTSSHQSNTTGFKPRRIKTTAKPPRQINNKEPSPATQP. Residues 41 to 95 form a Dof-type zinc finger; sequence LKCPRCDSVNTKFCYYNNYSLSQPRHYCKNCRRYWTRGGALRNVPIGGSTRNKNK. C43, C46, C68, and C71 together coordinate Zn(2+). The segment at 216-235 is disordered; sequence GGATSGNHEDNDDGEGNLGN.

As to quaternary structure, interacts with ZFP2. Highly expressed at the base of all organs of the flower, especially in the abscission zone (AZ) of petals, stamens and sepals. Expressed at low levels in sepals, filaments, stigmatic papillae, tips of young siliques, and at the base of pedicels and leaf trichomes.

The protein resides in the nucleus. Functionally, transcription factor that binds specifically to a 5'-AA[AG]G-3' consensus core sequence. Involved in the negative regulation of floral organ abscission by binding to the typical DOF 5'-AAAG-3' sequences in the promoter of ADPG2/PGAZAT, and by down-regulating its expression. ADPG2/PGAZAT is an abscission-related and cell wall hydrolyzing polygalacturonase. May act through the interaction with ZFP2, an abscission-related transcription factor. In Arabidopsis thaliana (Mouse-ear cress), this protein is Dof zinc finger protein DOF4.7.